Reading from the N-terminus, the 61-residue chain is Large ribosomal subunit protein uL29 (61 aa).

The protein belongs to the universal ribosomal protein uL29 family.

This is Large ribosomal subunit protein uL29 from Campylobacter lari (strain RM2100 / D67 / ATCC BAA-1060).